Reading from the N-terminus, the 112-residue chain is uncharacterized protein (112 aa).

The next 2 helical transmembrane spans lie at 55-75 and 91-111; these read LLEI…PTLF and LIML…LLLL.

The protein resides in the membrane. This is an uncharacterized protein from Saccharomyces cerevisiae (strain ATCC 204508 / S288c) (Baker's yeast).